The sequence spans 368 residues: Histidinol-phosphate aminotransferase (368 aa).

N6-(pyridoxal phosphate)lysine is present on Lys-226.

This sequence belongs to the class-II pyridoxal-phosphate-dependent aminotransferase family. Histidinol-phosphate aminotransferase subfamily. Homodimer. The cofactor is pyridoxal 5'-phosphate.

It catalyses the reaction L-histidinol phosphate + 2-oxoglutarate = 3-(imidazol-4-yl)-2-oxopropyl phosphate + L-glutamate. It functions in the pathway amino-acid biosynthesis; L-histidine biosynthesis; L-histidine from 5-phospho-alpha-D-ribose 1-diphosphate: step 7/9. The sequence is that of Histidinol-phosphate aminotransferase from Colwellia psychrerythraea (strain 34H / ATCC BAA-681) (Vibrio psychroerythus).